We begin with the raw amino-acid sequence, 187 residues long: 5-formyltetrahydrofolate cyclo-ligase (187 aa).

ATP is bound by residues R6 to R10, G139 to D146, and D178.

Belongs to the 5-formyltetrahydrofolate cyclo-ligase family.

The catalysed reaction is (6S)-5-formyl-5,6,7,8-tetrahydrofolate + ATP = (6R)-5,10-methenyltetrahydrofolate + ADP + phosphate. The protein operates within one-carbon metabolism; tetrahydrofolate interconversion. Functionally, involved in the removal of 5-formyltetrahydrofolate. In vitro, it is a potent inhibitor of various folate-dependent enzymes in the C1 metabolism network and in vivo it might function as a folate storage. 5-formyltetrahydrofolate is also used as an antifolate rescue agent in cancer chemotherapy. Catalyzes the irreversible ATP-dependent transformation of 5-formyltetrahydrofolate (5-CHO-THF) to form 5,10-methenyltetrahydrofolate (5,10-CH=THF). The reverse reaction is catalyzed by the serine hydroxymethyltransferase GlyA (SHMT). The sequence is that of 5-formyltetrahydrofolate cyclo-ligase from Haemophilus influenzae (strain ATCC 51907 / DSM 11121 / KW20 / Rd).